We begin with the raw amino-acid sequence, 198 residues long: uncharacterized protein (198 aa).

The disordered stretch occupies residues 166–198 (GYEPDEKARKKRERVKRSEVEDQLKINVKPTRR).

This is an uncharacterized protein from Coxiella burnetii (strain RSA 493 / Nine Mile phase I).